The following is a 66-amino-acid chain: uncharacterized protein (66 aa).

This sequence to M.jannaschii MJ0582.

This is an uncharacterized protein from Methanocaldococcus jannaschii (strain ATCC 43067 / DSM 2661 / JAL-1 / JCM 10045 / NBRC 100440) (Methanococcus jannaschii).